Consider the following 257-residue polypeptide: 3-methyl-2-oxobutanoate hydroxymethyltransferase (257 aa).

Mg(2+)-binding residues include D44 and D83. 3-methyl-2-oxobutanoate contacts are provided by residues 44–45 (DS), D83, and K113. Residue E115 participates in Mg(2+) binding. E182 functions as the Proton acceptor in the catalytic mechanism.

Belongs to the PanB family. As to quaternary structure, homodecamer; pentamer of dimers. The cofactor is Mg(2+).

The protein resides in the cytoplasm. The enzyme catalyses 3-methyl-2-oxobutanoate + (6R)-5,10-methylene-5,6,7,8-tetrahydrofolate + H2O = 2-dehydropantoate + (6S)-5,6,7,8-tetrahydrofolate. It participates in cofactor biosynthesis; (R)-pantothenate biosynthesis; (R)-pantoate from 3-methyl-2-oxobutanoate: step 1/2. Its function is as follows. Catalyzes the reversible reaction in which hydroxymethyl group from 5,10-methylenetetrahydrofolate is transferred onto alpha-ketoisovalerate to form ketopantoate. This chain is 3-methyl-2-oxobutanoate hydroxymethyltransferase, found in Rippkaea orientalis (strain PCC 8801 / RF-1) (Cyanothece sp. (strain PCC 8801)).